Here is a 1120-residue protein sequence, read N- to C-terminus: ELKS/Rab6-interacting/CAST family member 1 (1120 aa).

A disordered region spans residues 1-54 (MYGSARSVGKVEPSSQSPGRSPRLPRSPRLGHRRTNSTGGSSGNSVGGGSGKTL). N6-acetyllysine is present on K10. A compositionally biased stretch (low complexity) spans 13 to 28 (PSSQSPGRSPRLPRSP). 3 positions are modified to phosphoserine: S17, S21, and S37. T38 is modified (phosphothreonine). The segment covering 40–51 (GSSGNSVGGGSG) has biased composition (gly residues). Phosphoserine occurs at positions 55, 75, 94, 824, 965, and 1009. A coiled-coil region spans residues 144-992 (RQARDNTIMD…RMKLMADNYE (849 aa)). Residues 801-824 (KHKEQVEKKKSAQMLEEARRREDS) are compositionally biased toward basic and acidic residues. The disordered stretch occupies residues 801–840 (KHKEQVEKKKSAQMLEEARRREDSLSDSSQQLQDSLRKKD). A Phosphothreonine modification is found at T1050. Positions 1050-1112 (TPPASYNADG…DHCPDILEQV (63 aa)) constitute an FIP-RBD domain. The stretch at 1060–1104 (EQAAWENELQQMTQEQLQNELEKVEGDNAELQEFANTILQQIADH) forms a coiled coil.

Interacts with the GTB-bound forms of RAB6A isoform 1 and isoform 2 and with RAB6B. The interaction was strongest with RAB6B, followed by RAB6A isoform 2 and weakest with RAB6A isoform 1. Part of a complex with CHUK, IKBKB and IKBKG. Interacts with CHUK, IKBKB and IKBKG. The interaction with IKBKG is independent of CHUK and IKBKB. Interacts with NFKBIA. Isoform 2 interacts through its C-terminus with the PDZ domains of RIMS1 and RIMS2. Interacts with ERC2/CAST1. Interacts with SDCCAG8. Part of a cortical microtubule stabilization complex (CMSC) composed of KANK1, PPFIA1, PPFIBP1, ERC1/ELKS, PHLDB2/LL5beta, CLASPs, KIF21A and possibly additional interactors; within CMSCs KANK1 and PHLDB2/LL5beta appear to be the core components for targeting of microtubule-binding proteins KIF21A and CLASPs, whereas PPFIA1, PPFIBP1 and ERC1/ELKS serve as scaffolds for protein clustering. As to expression, widely expressed.

The protein resides in the cytoplasm. Its subcellular location is the cytoskeleton. The protein localises to the microtubule organizing center. It localises to the centrosome. It is found in the membrane. The protein resides in the golgi apparatus membrane. Its subcellular location is the presynaptic active zone. The protein localises to the cell projection. It localises to the podosome. Functionally, regulatory subunit of the IKK complex. Probably recruits IkappaBalpha/NFKBIA to the complex. May be involved in the organization of the cytomatrix at the nerve terminals active zone (CAZ) which regulates neurotransmitter release. May be involved in vesicle trafficking at the CAZ. May be involved in Rab-6 regulated endosomes to Golgi transport. The polypeptide is ELKS/Rab6-interacting/CAST family member 1 (Mus musculus (Mouse)).